The sequence spans 73 residues: Large ribosomal subunit protein bL31 (73 aa).

The protein belongs to the bacterial ribosomal protein bL31 family. Type A subfamily. In terms of assembly, part of the 50S ribosomal subunit.

Functionally, binds the 23S rRNA. This is Large ribosomal subunit protein bL31 (rpmE) from Roseobacter denitrificans (strain ATCC 33942 / OCh 114) (Erythrobacter sp. (strain OCh 114)).